Here is a 7152-residue protein sequence, read N- to C-terminus: Replicase polyprotein 1ab (7152 aa).

The CoV Nsp1 globular domain maps to Tyr54–Tyr174. In terms of domain architecture, BetaCoV Nsp1 C-terminal spans Phe192–Gly222. Residues Val226–Tyr488 form the CoV Nsp2 N-terminal domain. Positions 365, 370, 386, and 389 each coordinate Zn(2+). Positions Cys365–Cys389 are C4. The region spanning Cys493 to Leu681 is the CoV Nsp2 middle domain. Positions Leu697 to Ala809 constitute a CoV Nsp2 C-terminal domain. Residues Arg811 to Val923 enclose the Ubiquitin-like 1 domain. A run of 11 repeats spans residues Asn945 to Asp954, Asn955 to Asp964, Asn965 to Asp974, Asn975 to Asp984, Asn985 to Asp994, Asn995 to Asp1004, Asn1005 to Asp1014, Asn1015 to Asp1024, Asn1025 to Asp1034, Asn1035 to Asp1044, and Asn1045 to Asp1054. An 11 X 10 AA tandem repeat of N-[DN]-D-E-D-V-V-T-G-D region spans residues Asn945–Asp1054. A disordered region spans residues Asp947–Asp1036. Positions Val1093–Asn1343 constitute a Peptidase C16 1 domain. The For PL1-PRO activity role is filled by Cys1131. Zn(2+) contacts are provided by Cys1208, Cys1211, Cys1234, and Cys1236. Residues Cys1208–Cys1236 form a C4-type 1 zinc finger. Catalysis depends on for PL1-PRO activity residues His1282 and Asp1293. A Macro domain is found at Glu1321–Val1492. A DPUP domain is found at Asn1548–Ala1619. Positions Ala1619–Gln1674 constitute a Ubiquitin-like 2 domain. Positions Ser1688–Gln1948 constitute a Peptidase C16 2 domain. The active-site For PL2-PRO activity is the Cys1727. Zn(2+) is bound by residues Cys1805, Cys1807, Cys1839, and Cys1841. Residues Cys1805–Cys1841 form a C4-type 2 zinc finger. Residues His1884 and Asp1898 each act as for PL2-PRO activity in the active site. The Nucleic acid-binding domain maps to Ile1962–Ser2063. The G2M domain maps to Glu2078–Glu2227. Helical transmembrane passes span Ala2196–Phe2216, Phe2257–Phe2277, and Phe2288–Ile2308. The segment at Ala2196–Val2433 is HD1. Residues Gly2293–Asp2354 enclose the 3Ecto domain. Intrachain disulfides connect Cys2309/Cys2333 and Cys2324/Cys2330. The next 2 membrane-spanning stretches (helical) occupy residues Leu2371–Leu2391 and Phe2413–Val2433. The segment at Gly2441–Asp2531 is Y1. The 368-residue stretch at Gly2441–Gly2808 folds into the CoV Nsp3 Y domain. Residues His2445, Cys2450, Cys2455, Cys2458, Cys2491, His2494, Cys2498, and Cys2501 each contribute to the Zn(2+) site. Residues His2445–Cys2458 are ZF1. Positions Cys2491–Cys2501 are ZF2. The segment at Ala2532–Ala2624 is Y2. A coV-Y region spans residues Ala2532 to Gly2808. The Y3 stretch occupies residues Cys2625–Gly2707. Residues Leu2708–Gly2808 are Y4. Transmembrane regions (helical) follow at residues Leu2814–Pro2834, Ala3089–Ile3109, Val3121–Val3141, Val3148–Met3168, and Ile3173–Ile3193. An HD2 region spans residues Leu2814–Ile3193. Residues Ile3207–Gln3304 enclose the Nsp4C domain. The region spanning Ser3305 to Gln3607 is the Peptidase C30 domain. Active-site for 3CL-PRO activity residues include His3345 and Cys3449. A run of 7 helical transmembrane segments spans residues Ile3621–Phe3641, Thr3646–Val3666, Phe3671–Val3691, Phe3714–Thr3734, Ile3742–Gly3762, Leu3770–Ile3790, and Leu3813–Ser3833. Residues Ile3621–Ser3833 are HD3. Positions Ser3895 to Gln3983 constitute a RdRp Nsp7 cofactor domain. The region spanning Ala3984–Gln4180 is the RdRp Nsp8 cofactor domain. A Nsp9 ssRNA-binding domain is found at Asn4181–Gln4290. The ExoN/MTase coactivator domain maps to Ala4291–Ser4428. Zn(2+)-binding residues include Cys4364, Cys4367, His4373, Cys4380, Cys4406, Cys4409, Cys4417, and Cys4419. 2 zinc fingers span residues Cys4364–Cys4380 and Cys4406–Cys4419. In terms of domain architecture, NiRAN spans Phe4433–Tyr4688. Mn(2+) is bound by residues Asn4636 and Asp4645. The Nsp12 Interface domain maps to Arg4689–Tyr4787. Residues His4718, Cys4724, Cys4729, Cys4733, and Cys4910 each contribute to the Zn(2+) site. Positions Arg4788 to Gln5355 constitute a Nsp12 RNA-dependent RNA polymerase domain. The segment at Ser4790–Ala5004 is rdRp Fingers N-ter. The tract at residues Thr5005–Pro5043 is rdRp Palm N-ter. The RdRp catalytic domain maps to Pro5035 to Gly5197. A rdRp Fingers C-ter region spans residues Lys5044–Gly5102. Residues His5065, Cys5068, and Cys5069 each coordinate Zn(2+). Residues Thr5103–Gln5238 form a rdRp Palm C-ter region. Residues Ser5182, Asp5183, and Asp5184 contribute to the active site. A rdRp Thumb region spans residues His5239–Gln5355. The CV ZBD domain maps to Ser5356–Lys5468. Residues Cys5360, Cys5363, Cys5371, Cys5374, Cys5381, Cys5384, His5388, His5394, Cys5405, Cys5410, Cys5427, and His5430 each contribute to the Zn(2+) site. Residues Ser5611 to Leu5792 enclose the (+)RNA virus helicase ATP-binding domain. Gly5636–Ser5643 is a binding site for ATP. In terms of domain architecture, (+)RNA virus helicase C-terminal spans Gly5793–Asn5962. In terms of domain architecture, ExoN spans Phe6029 to Cys6244. Residues Asp6047, Glu6049, and Glu6148 contribute to the active site. Zn(2+)-binding residues include Cys6164, Cys6167, Cys6183, His6186, His6214, Cys6218, and His6221. Catalysis depends on residues His6225 and Asp6230. Cys6236 contacts Zn(2+). Residues Tyr6253–Gln6479 form the N7-MTase domain. Asp6288–Gly6294 provides a ligand contact to S-adenosyl-L-methionine. The gpppA-binding stretch occupies residues Cys6366–Thr6380. Zn(2+) contacts are provided by Cys6404, Cys6425, Cys6436, and His6439. The region spanning Ser6480–Arg6540 is the Nsp15 N-terminal oligomerization domain. Positions Ser6541–Val6661 constitute an AV-Nsp11N/CoV-Nsp15M domain. The region spanning Glu6711–Pro6850 is the NendoU domain. Active-site residues include His6741, His6756, Lys6796, Lys6899, Asp6983, Lys7023, and Glu7056. The Nidovirus-type SAM-dependent 2'-O-MTase domain occupies Thr6855–Val7149.

The protein belongs to the coronaviruses polyprotein 1ab family. As to quaternary structure, interacts with host PHB and PHB2. Interacts with papain-like protease nsp3 and non-structural protein 6. In terms of assembly, monomer. Homodimer. Only the homodimer shows catalytic activity. As to quaternary structure, interacts with nsp8 and nsp12 to form the replication-transcription complex (RTC): nsp12, nsp7, two subunits of nsp8, and up to two subunits of nsp13. Interacts with nsp7, nsp13 and nsp12 to form the replication-transcription complex (RTC): nsp12, nsp7, two subunits of nsp8, and up to two subunits of nsp13. In terms of assembly, interacts with nsp12. As to quaternary structure, interacts with proofreading exoribonuclease nsp14 and 2'-O-methyltransferase nsp16; these interactions enhance nsp14 and nsp16 enzymatic activities. Interacts with nsp7 and nsp8 to form the replication-transcription complex (RTC): nsp12, nsp7, two subunits of nsp8, and up to two subunits of nsp13. Interacts with nsp9. In terms of assembly, interacts with nsp8 to form the replication-transcription complex (RTC): nsp12, nsp7, two subunits of nsp8, and up to two subunits of nsp13. It depends on Mn(2+) as a cofactor. Mg(2+) serves as cofactor. Post-translationally, specific enzymatic cleavages in vivo by its own proteases yield mature proteins. 3CL-PRO and PL-PRO proteinases are autocatalytically processed.

The protein resides in the host membrane. The protein localises to the host cytoplasm. Its subcellular location is the host perinuclear region. It localises to the host endoplasmic reticulum-Golgi intermediate compartment. The enzyme catalyses RNA(n) + a ribonucleoside 5'-triphosphate = RNA(n+1) + diphosphate. The catalysed reaction is ATP + H2O = ADP + phosphate + H(+). It carries out the reaction Thiol-dependent hydrolysis of ester, thioester, amide, peptide and isopeptide bonds formed by the C-terminal Gly of ubiquitin (a 76-residue protein attached to proteins as an intracellular targeting signal).. It catalyses the reaction a 5'-end (N(7)-methyl 5'-triphosphoguanosine)-ribonucleoside in mRNA + S-adenosyl-L-methionine = a 5'-end (N(7)-methyl 5'-triphosphoguanosine)-(2'-O-methyl-ribonucleoside) in mRNA + S-adenosyl-L-homocysteine + H(+). The enzyme catalyses uridylyl-uridylyl-ribonucleotide-RNA = a 3'-end uridylyl-2',3'-cyclophospho-uridine-RNA + a 5'-end dephospho-ribonucleoside-RNA. The catalysed reaction is a 5'-end diphospho-ribonucleoside in mRNA + GTP + H(+) = a 5'-end (5'-triphosphoguanosine)-ribonucleoside in mRNA + diphosphate. It carries out the reaction a 5'-end (5'-triphosphoguanosine)-ribonucleoside in mRNA + S-adenosyl-L-methionine = a 5'-end (N(7)-methyl 5'-triphosphoguanosine)-ribonucleoside in mRNA + S-adenosyl-L-homocysteine. Its function is as follows. The replicase polyprotein of coronaviruses is a multifunctional protein: it contains the activities necessary for the transcription of negative stranded RNA, leader RNA, subgenomic mRNAs and progeny virion RNA as well as proteinases responsible for the cleavage of the polyprotein into functional products. In terms of biological role, inhibits host translation by interacting with the 40S ribosomal subunit. The nsp1-40S ribosome complex further induces an endonucleolytic cleavage near the 5'UTR of host mRNAs, targeting them for degradation. Viral mRNAs are not susceptible to nsp1-mediated endonucleolytic RNA cleavage thanks to the presence of a 5'-end leader sequence and are therefore protected from degradation. By suppressing host gene expression, nsp1 facilitates efficient viral gene expression in infected cells and evasion from host immune response. May play a role in the modulation of host cell survival signaling pathway by interacting with host PHB and PHB2. Indeed, these two proteins play a role in maintaining the functional integrity of the mitochondria and protecting cells from various stresses. Functionally, responsible for the cleavages located at the N-terminus of the replicase polyprotein. In addition, PL-PRO possesses a deubiquitinating/deISGylating activity and processes both 'Lys-48'- and 'Lys-63'-linked polyubiquitin chains from cellular substrates. Participates together with nsp4 in the assembly of virally-induced cytoplasmic double-membrane vesicles necessary for viral replication. Antagonizes innate immune induction of type I interferon by blocking the phosphorylation, dimerization and subsequent nuclear translocation of host IRF3. Also prevents host NF-kappa-B signaling. Its function is as follows. Participates in the assembly of virally-induced cytoplasmic double-membrane vesicles necessary for viral replication. In terms of biological role, cleaves the C-terminus of replicase polyprotein at 11 sites. Recognizes substrates containing the core sequence [ILMVF]-Q-|-[SGACN]. Also able to bind an ADP-ribose-1''-phosphate (ADRP). Plays a role in the initial induction of autophagosomes from host endoplasmic reticulum. Later, limits the expansion of these phagosomes that are no longer able to deliver viral components to lysosomes. Functionally, forms a hexadecamer with nsp8 (8 subunits of each) that may participate in viral replication by acting as a primase. Alternatively, may synthesize substantially longer products than oligonucleotide primers. Its function is as follows. Forms a hexadecamer with nsp7 (8 subunits of each) that may participate in viral replication by acting as a primase. Alternatively, may synthesize substantially longer products than oligonucleotide primers. In terms of biological role, forms a primer, NSP9-pU, which is utilized by the polymerase for the initiation of RNA chains. Interacts with ribosome signal recognition particle RNA (SRP). Together with NSP8, suppress protein integration into the cell membrane, thereby disrupting host immune defenses. Plays a pivotal role in viral transcription by stimulating both nsp14 3'-5' exoribonuclease and nsp16 2'-O-methyltransferase activities. Therefore plays an essential role in viral mRNAs cap methylation. Functionally, RNA-directed RNA polymerase that catalyzes the transcription of viral genomic and subgenomic RNAs. Acts in complex with nsp7 and nsp8 to transcribe both the minus and positive strands of genomic RNA. The kinase-like NiRAN domain of NSP12 attaches one or more nucleotides to the amino terminus of NSP9, forming a covalent RNA-protein intermediate that serves as transcription/replication primer. Subgenomic RNAs (sgRNAs) are formed by discontinuous transcription: The polymerase has the ability to pause at transcription-regulating sequences (TRS) and jump to the leader TRS, resulting in a major deletion. This creates a series of subgenomic RNAs that are replicated, transcribed and translated. In addition, Nsp12 is a subunit of the viral RNA capping enzyme that catalyzes the RNA guanylyltransferase reaction for genomic and sub-genomic RNAs. Subsequently, the NiRAN domain transfers RNA to GDP, and forms the core cap structure GpppA-RNA. Its function is as follows. Multi-functional protein with a zinc-binding domain in N-terminus displaying RNA and DNA duplex-unwinding activities with 5' to 3' polarity. Activity of helicase is dependent on magnesium. In terms of biological role, plays a role in viral RNA synthesis through two distinct activities. The N7-guanine methyltransferase activity plays a role in the formation of the cap structure GpppA-RNA. The proofreading exoribonuclease reduces the sensitivity of the virus to RNA mutagens during replication. This activity acts on both ssRNA and dsRNA in a 3'-5' direction. Plays a role in viral transcription/replication and prevents the simultaneous activation of host cell dsRNA sensors, such as MDA5/IFIH1, OAS, and PKR. Acts by degrading the 5'-polyuridines generated during replication of the poly(A) region of viral genomic and subgenomic RNAs. Catalyzes a two-step reaction in which a 2'3'-cyclic phosphate (2'3'-cP) is first generated by 2'-O transesterification, which is then hydrolyzed to a 3'-phosphate (3'-P). If not degraded, poly(U) RNA would hybridize with poly(A) RNA tails and activate host dsRNA sensors. Functionally, methyltransferase that mediates mRNA cap 2'-O-ribose methylation to the 5'-cap structure of viral mRNAs. N7-methyl guanosine cap is a prerequisite for binding of nsp16. Therefore plays an essential role in viral mRNAs cap methylation which is essential to evade immune system. The sequence is that of Replicase polyprotein 1ab (rep) from Homo sapiens (Human).